A 420-amino-acid chain; its full sequence is Gamma-glutamyl phosphate reductase (420 aa).

It belongs to the gamma-glutamyl phosphate reductase family.

Its subcellular location is the cytoplasm. The enzyme catalyses L-glutamate 5-semialdehyde + phosphate + NADP(+) = L-glutamyl 5-phosphate + NADPH + H(+). It participates in amino-acid biosynthesis; L-proline biosynthesis; L-glutamate 5-semialdehyde from L-glutamate: step 2/2. Functionally, catalyzes the NADPH-dependent reduction of L-glutamate 5-phosphate into L-glutamate 5-semialdehyde and phosphate. The product spontaneously undergoes cyclization to form 1-pyrroline-5-carboxylate. In Neisseria meningitidis serogroup C (strain 053442), this protein is Gamma-glutamyl phosphate reductase.